A 172-amino-acid polypeptide reads, in one-letter code: Spore coat protein X (172 aa).

It is found in the spore coat. The polypeptide is Spore coat protein X (cotX) (Bacillus subtilis (strain 168)).